A 957-amino-acid polypeptide reads, in one-letter code: ERC protein 2 (957 aa).

The span at M1–G13 shows a compositional bias: polar residues. Positions M1–L44 are disordered. The segment covering S14–P25 has biased composition (low complexity). A phosphoserine mark is found at S65 and S666. The stretch at R140 to D917 forms a coiled coil. A compositionally biased stretch (basic residues) spans H922–H943. A disordered region spans residues H922–A957. Residues D948–A957 show a composition bias toward acidic residues.

Interacts with BSN, ERC1, PPFIA1, PPFIA2, PPFIA3 and PPFIA4. Interacts through its C-terminus with the PDZ domain of RIMS1. Part of a complex consisting of ERC2, RIMS1 and UNC13A. In terms of tissue distribution, expressed throughout the central nervous system, including hippocampus, cortex, cerebellum and olfactory bulb.

Its subcellular location is the cytoplasm. The protein localises to the synapse. The protein resides in the presynaptic active zone. It is found in the cytoskeleton. Its function is as follows. Thought to be involved in the organization of the cytomatrix at the nerve terminals active zone (CAZ) which regulates neurotransmitter release. Seems to act together with BSN. May recruit liprin-alpha proteins to the CAZ. The sequence is that of ERC protein 2 (Erc2) from Mus musculus (Mouse).